A 266-amino-acid chain; its full sequence is Metallo-beta-lactamase VIM-2 (266 aa).

Positions 1–20 (MFKLLSKLLVYLTASIMAIA) are cleaved as a signal peptide. Residues H114, H116, and C198 each contribute to the Zn(2+) site.

This sequence belongs to the metallo-beta-lactamase superfamily. Class-B beta-lactamase family. In terms of assembly, monomer. Requires Zn(2+) as cofactor.

The protein resides in the periplasm. The enzyme catalyses a beta-lactam + H2O = a substituted beta-amino acid. With respect to regulation, inhibited by chelating agents such as EDTA. Inhibited by a fungal natural product, aspergillomarasmine A (AMA). Inhibited by 2-triazolylthioacetamides. Functionally, class B beta-lactamase which confers resistance to the beta-lactam antibiotics, including penicillins, cephalosporins and carbapenems. Acts via hydrolysis of the beta-lactam ring. Has penicillin-, cephalosporin- and carbapenem-hydrolyzing activities. The polypeptide is Metallo-beta-lactamase VIM-2 (Escherichia coli).